The primary structure comprises 251 residues: Octanoyltransferase (251 aa).

The 223-residue stretch at 29–251 folds into the BPL/LPL catalytic domain; that stretch reads AATPNSLWIC…GQKLSSYLAP (223 aa). 68 to 75 contacts substrate; the sequence is RGGQVTYH. The interval 137-174 is disordered; it reads ARLRPSPQPSPKGRGSSTPVLLPPLPGEGGGGGGPDPD. Substrate is bound by residues 184–186 and 197–199; these read ALG and GVA. Catalysis depends on Cys-215, which acts as the Acyl-thioester intermediate.

Belongs to the LipB family.

Its subcellular location is the cytoplasm. The enzyme catalyses octanoyl-[ACP] + L-lysyl-[protein] = N(6)-octanoyl-L-lysyl-[protein] + holo-[ACP] + H(+). Its pathway is protein modification; protein lipoylation via endogenous pathway; protein N(6)-(lipoyl)lysine from octanoyl-[acyl-carrier-protein]: step 1/2. In terms of biological role, catalyzes the transfer of endogenously produced octanoic acid from octanoyl-acyl-carrier-protein onto the lipoyl domains of lipoate-dependent enzymes. Lipoyl-ACP can also act as a substrate although octanoyl-ACP is likely to be the physiological substrate. This chain is Octanoyltransferase, found in Polaromonas sp. (strain JS666 / ATCC BAA-500).